Here is a 232-residue protein sequence, read N- to C-terminus: N-(5'-phosphoribosyl)anthranilate isomerase (232 aa).

Belongs to the TrpF family.

It catalyses the reaction N-(5-phospho-beta-D-ribosyl)anthranilate = 1-(2-carboxyphenylamino)-1-deoxy-D-ribulose 5-phosphate. It participates in amino-acid biosynthesis; L-tryptophan biosynthesis; L-tryptophan from chorismate: step 3/5. The sequence is that of N-(5'-phosphoribosyl)anthranilate isomerase (TRP1) from Lipomyces starkeyi (Oleaginous yeast).